Here is a 171-residue protein sequence, read N- to C-terminus: Adenine phosphoribosyltransferase (171 aa).

This sequence belongs to the purine/pyrimidine phosphoribosyltransferase family. Homodimer.

It is found in the cytoplasm. It carries out the reaction AMP + diphosphate = 5-phospho-alpha-D-ribose 1-diphosphate + adenine. It participates in purine metabolism; AMP biosynthesis via salvage pathway; AMP from adenine: step 1/1. In terms of biological role, catalyzes a salvage reaction resulting in the formation of AMP, that is energically less costly than de novo synthesis. The chain is Adenine phosphoribosyltransferase from Halalkalibacterium halodurans (strain ATCC BAA-125 / DSM 18197 / FERM 7344 / JCM 9153 / C-125) (Bacillus halodurans).